We begin with the raw amino-acid sequence, 71 residues long: Cell division protein ZapB (71 aa).

Residues 5-67 adopt a coiled-coil conformation; that stretch reads LEVLEQLESK…RALLGKMDQM (63 aa).

The protein belongs to the ZapB family. Homodimer. The ends of the coiled-coil dimer bind to each other, forming polymers. Interacts with FtsZ.

Its subcellular location is the cytoplasm. In terms of biological role, non-essential, abundant cell division factor that is required for proper Z-ring formation. It is recruited early to the divisome by direct interaction with FtsZ, stimulating Z-ring assembly and thereby promoting cell division earlier in the cell cycle. Its recruitment to the Z-ring requires functional FtsA or ZipA. The polypeptide is Cell division protein ZapB (Aeromonas hydrophila subsp. hydrophila (strain ATCC 7966 / DSM 30187 / BCRC 13018 / CCUG 14551 / JCM 1027 / KCTC 2358 / NCIMB 9240 / NCTC 8049)).